A 119-amino-acid polypeptide reads, in one-letter code: Large ribosomal subunit protein bL20 (119 aa).

This sequence belongs to the bacterial ribosomal protein bL20 family.

Its function is as follows. Binds directly to 23S ribosomal RNA and is necessary for the in vitro assembly process of the 50S ribosomal subunit. It is not involved in the protein synthesizing functions of that subunit. The chain is Large ribosomal subunit protein bL20 from Alcanivorax borkumensis (strain ATCC 700651 / DSM 11573 / NCIMB 13689 / SK2).